Consider the following 121-residue polypeptide: Large ribosomal subunit protein uL22 (121 aa).

This sequence belongs to the universal ribosomal protein uL22 family. In terms of assembly, part of the 50S ribosomal subunit.

Its function is as follows. This protein binds specifically to 23S rRNA; its binding is stimulated by other ribosomal proteins, e.g. L4, L17, and L20. It is important during the early stages of 50S assembly. It makes multiple contacts with different domains of the 23S rRNA in the assembled 50S subunit and ribosome. Functionally, the globular domain of the protein is located near the polypeptide exit tunnel on the outside of the subunit, while an extended beta-hairpin is found that lines the wall of the exit tunnel in the center of the 70S ribosome. This Synechococcus sp. (strain CC9311) protein is Large ribosomal subunit protein uL22.